We begin with the raw amino-acid sequence, 232 residues long: Ion-translocating oxidoreductase complex subunit E (232 aa).

6 helical membrane-spanning segments follow: residues 12–31, 39–59, 69–89, 92–112, 125–145, and 182–202; these read LWRN…LLAV, LGLG…VSAL, IPIY…LINA, FGLY…CIVI, ALAA…LLLL, and PFLL…MLVG.

This sequence belongs to the NqrDE/RnfAE family. The complex is composed of six subunits: RnfA, RnfB, RnfC, RnfD, RnfE and RnfG.

Its subcellular location is the cell inner membrane. Part of a membrane-bound complex that couples electron transfer with translocation of ions across the membrane. The protein is Ion-translocating oxidoreductase complex subunit E of Sodalis glossinidius (strain morsitans).